Reading from the N-terminus, the 939-residue chain is MSRIRIYELAKEAGMSGKAFADKLIKKGYQIKGHSSTVDDATADEIRRTFLGTKESGQDTGQATNEAAAAHRPTTVIGGKKVDEPVVPEKIVEEVQAVSVEVPKEVVAEEVKKSEPVKAEKSEPVIQEVAPVVEELVTNKEAPTAPLEREEESQLKAQKPTIEKEESAAVAKPEVVSAGSNEKKAGAPEIKRAEHTETVEKSKTAVDSKKVATPASTDKKVKPAQQPYRSGGVRVIGRVELPIQREEPSRPRRKPTRPPVNRSPRPSTPSPNRSAGGPPKPAAPATPAQDDSRNRKKKGRRDEKPAERDSRPKAKGKKGVKFTHFGTDYQNRGRRPRRGKRDAQTLPPSEMKASKKHVKVYDTITVGDLAGRMKVKASDVIGKLMGLGLMATINQSVDIDTATLIATEYGYEVDQGITDELGIQLLTEAEEGGIEVGRCPVVTVMGHVDHGKTSILDAIRKTDVADGEAGGITQHIGAYHVKAASGDVTFVDTPGHAAFTEMRSRGAQVTDIVILVVAADDGVMDQTREAIRHSQAANVPIIVAVNKIDKDNADVERVKRELAELDLSPEEWGGTTMYCETSAKQQIGIDELMESVQLAAEMLELKANPDRKVIGRVLEAQLDKGRGPVATILVQAGTLAKGDHFVVGQHSGKVRAMLDYRGRSLAEAGPSIPVEVQGLSGVPSAGDEFVVVTDEKMAKAVSHDRAMKAREAELGASTKISLDKLFEQMSEGEVRELRVVLRADVQGTLEAFAKAAADLSTKAIKVRLLHEGTGTITDSDILLASASDAIIIGFNVRPSAKVKALADKEHVDVRSYDVIYHALDDIRDAMVGMLDPTFEEEIIGDAEVRDIFSVPKIGVIGGCYVTSGKIQRNAGVRVLREGVVLYTGKIGSLRRFKDDAKEVASGYECGIGVENFNNIKIGDVLEAFIMNEVAATLGE.

Disordered regions lie at residues 51–81 and 137–353; these read LGTK…GGKK and VTNK…EMKA. Positions 181–210 are enriched in basic and acidic residues; that stretch reads NEKKAGAPEIKRAEHTETVEKSKTAVDSKK. Low complexity predominate over residues 259–277; the sequence is PVNRSPRPSTPSPNRSAGG. Residues 300-312 are compositionally biased toward basic and acidic residues; sequence RRDEKPAERDSRP. The tr-type G domain maps to 437–606; that stretch reads GRCPVVTVMG…QLAAEMLELK (170 aa). Residues 446 to 453 form a G1 region; it reads GHVDHGKT. 446-453 is a GTP binding site; the sequence is GHVDHGKT. The interval 471–475 is G2; it reads GITQH. A G3 region spans residues 492–495; that stretch reads DTPG. GTP is bound by residues 492 to 496 and 546 to 549; these read DTPGH and NKID. The tract at residues 546–549 is G4; the sequence is NKID. The tract at residues 582-584 is G5; sequence SAK.

This sequence belongs to the TRAFAC class translation factor GTPase superfamily. Classic translation factor GTPase family. IF-2 subfamily.

It localises to the cytoplasm. Its function is as follows. One of the essential components for the initiation of protein synthesis. Protects formylmethionyl-tRNA from spontaneous hydrolysis and promotes its binding to the 30S ribosomal subunits. Also involved in the hydrolysis of GTP during the formation of the 70S ribosomal complex. This is Translation initiation factor IF-2 from Desulfotalea psychrophila (strain LSv54 / DSM 12343).